A 271-amino-acid chain; its full sequence is 2,3,4,5-tetrahydropyridine-2,6-dicarboxylate N-succinyltransferase (271 aa).

Residues R103 and D140 each contribute to the substrate site.

This sequence belongs to the transferase hexapeptide repeat family. As to quaternary structure, homotrimer.

It is found in the cytoplasm. The catalysed reaction is (S)-2,3,4,5-tetrahydrodipicolinate + succinyl-CoA + H2O = (S)-2-succinylamino-6-oxoheptanedioate + CoA. It participates in amino-acid biosynthesis; L-lysine biosynthesis via DAP pathway; LL-2,6-diaminopimelate from (S)-tetrahydrodipicolinate (succinylase route): step 1/3. This Methylococcus capsulatus (strain ATCC 33009 / NCIMB 11132 / Bath) protein is 2,3,4,5-tetrahydropyridine-2,6-dicarboxylate N-succinyltransferase.